The chain runs to 62 residues: Beta-defensin 37 (62 aa).

Positions 1–16 (MKFSYFLLLLLSLSNF) are cleaved as a signal peptide. Cystine bridges form between Cys-29–Cys-58, Cys-36–Cys-51, and Cys-41–Cys-59.

The protein belongs to the beta-defensin family. In terms of tissue distribution, only expressed in epididymis (corpus and cauda).

The protein localises to the secreted. In terms of biological role, has antibacterial activity. The sequence is that of Beta-defensin 37 (Defb37) from Mus musculus (Mouse).